The primary structure comprises 53 residues: Ovomucoid (53 aa).

The region spanning 3–53 is the Kazal-like domain; sequence VDCSEYPKPGCMMERLPLCGSDNKTYNDKCNFCNAVVESNGTLTLNHFGEC. 3 cysteine pairs are disulfide-bonded: C5-C35, C13-C32, and C21-C53. An N-linked (GlcNAc...) asparagine glycan is attached at N42.

It is found in the secreted. The sequence is that of Ovomucoid from Turnix sylvaticus (Common buttonquail).